Reading from the N-terminus, the 451-residue chain is GTPase Der (451 aa).

EngA-type G domains are found at residues 5–170 and 186–359; these read PVVA…VAPP and IKLA…AAAF. GTP contacts are provided by residues 11–18, 58–62, 122–125, 192–199, 239–243, and 304–307; these read GRPNVGKS, DTGGF, NKAE, DTAGL, and NKWD. Residues 360-444 form the KH-like domain; that stretch reads AKLSTPRLTR…PLRIEFKSSR (85 aa).

This sequence belongs to the TRAFAC class TrmE-Era-EngA-EngB-Septin-like GTPase superfamily. EngA (Der) GTPase family. Associates with the 50S ribosomal subunit.

Its function is as follows. GTPase that plays an essential role in the late steps of ribosome biogenesis. This chain is GTPase Der, found in Bordetella bronchiseptica (strain ATCC BAA-588 / NCTC 13252 / RB50) (Alcaligenes bronchisepticus).